The following is a 263-amino-acid chain: Dihydromethanophenazine:CoB--CoM heterodisulfide reductase subunit E (263 aa).

5 consecutive transmembrane segments (helical) span residues 18-38 (TFVQ…YGLI), 108-128 (VMHL…GMMF), 150-170 (FLSI…LVAL), 184-204 (IMYD…GFIA), and 221-241 (VAPP…IAFI).

It belongs to the HdrE family. In terms of assembly, the dihydromethanophenazine:CoB--CoM heterodisulfide reductase is composed of two subunits; HdrD and HdrE. The cofactor is heme b.

The protein resides in the cell membrane. The catalysed reaction is methanophenazine + coenzyme B + coenzyme M = dihydromethanophenazine + coenzyme M-coenzyme B heterodisulfide. Its pathway is cofactor metabolism; coenzyme M-coenzyme B heterodisulfide reduction; coenzyme B and coenzyme M from coenzyme M-coenzyme B heterodisulfide: step 1/1. In terms of biological role, part of a complex that catalyzes the reversible reduction of CoM-S-S-CoB to the thiol-coenzymes H-S-CoM (coenzyme M) and H-S-CoB (coenzyme B). HdrE may be responsible for anchoring the complex to the membrane. This Methanosarcina barkeri (strain Fusaro / DSM 804) protein is Dihydromethanophenazine:CoB--CoM heterodisulfide reductase subunit E (hdrE).